The sequence spans 199 residues: Holliday junction branch migration complex subunit RuvA (199 aa).

The segment at 1–64 (MIGRLRGILL…DDAHLLYAFA (64 aa)) is domain I. Residues 65–143 (SEKERGLFRS…DMPESGVAGM (79 aa)) form a domain II region. The tract at residues 144–150 (RPDRVDG) is flexible linker. Residues 151–199 (SAPGTVAEAVSALVALGYKPNEASRAVRRLDTEALTTEEIIRQALQRML) form a domain III region.

The protein belongs to the RuvA family. In terms of assembly, homotetramer. Forms an RuvA(8)-RuvB(12)-Holliday junction (HJ) complex. HJ DNA is sandwiched between 2 RuvA tetramers; dsDNA enters through RuvA and exits via RuvB. An RuvB hexamer assembles on each DNA strand where it exits the tetramer. Each RuvB hexamer is contacted by two RuvA subunits (via domain III) on 2 adjacent RuvB subunits; this complex drives branch migration. In the full resolvosome a probable DNA-RuvA(4)-RuvB(12)-RuvC(2) complex forms which resolves the HJ.

It localises to the cytoplasm. Functionally, the RuvA-RuvB-RuvC complex processes Holliday junction (HJ) DNA during genetic recombination and DNA repair, while the RuvA-RuvB complex plays an important role in the rescue of blocked DNA replication forks via replication fork reversal (RFR). RuvA specifically binds to HJ cruciform DNA, conferring on it an open structure. The RuvB hexamer acts as an ATP-dependent pump, pulling dsDNA into and through the RuvAB complex. HJ branch migration allows RuvC to scan DNA until it finds its consensus sequence, where it cleaves and resolves the cruciform DNA. The protein is Holliday junction branch migration complex subunit RuvA of Nitrosococcus oceani (strain ATCC 19707 / BCRC 17464 / JCM 30415 / NCIMB 11848 / C-107).